The sequence spans 530 residues: Cytochrome P450 78A6 (530 aa).

A helical transmembrane segment spans residues 25-45; sequence LAFSLLAVTIIWLAISLFLWT. Cysteine 474 provides a ligand contact to heme.

Belongs to the cytochrome P450 family. Heme is required as a cofactor. As to expression, expressed in leaves, sepals, petals, stamens, carpels and developing ovules.

It localises to the membrane. Plays a role in seed and fruit development. Functions probably in association with CYP78A9 in the regulation of seed growth. Acts maternally to promote seed growth. The protein is Cytochrome P450 78A6 (CYP78A6) of Arabidopsis thaliana (Mouse-ear cress).